We begin with the raw amino-acid sequence, 20 residues long: Glutathione S-transferase 2 (20 aa).

The GST N-terminal domain maps to 1–20 (GYKVTYFAIRGLAEPIXLLL). Residue Tyr6 participates in glutathione binding.

This sequence belongs to the GST superfamily. Sigma family.

It catalyses the reaction RX + glutathione = an S-substituted glutathione + a halide anion + H(+). Its function is as follows. Conjugation of reduced glutathione to a wide number of exogenous and endogenous hydrophobic electrophiles. The sequence is that of Glutathione S-transferase 2 (GST2) from Ascaris suum (Pig roundworm).